The primary structure comprises 82 residues: DNA-directed RNA polymerase subunit Rpo5 (82 aa).

The protein belongs to the archaeal Rpo5/eukaryotic RPB5 RNA polymerase subunit family. Part of the RNA polymerase complex.

It is found in the cytoplasm. It catalyses the reaction RNA(n) + a ribonucleoside 5'-triphosphate = RNA(n+1) + diphosphate. Functionally, DNA-dependent RNA polymerase (RNAP) catalyzes the transcription of DNA into RNA using the four ribonucleoside triphosphates as substrates. This is DNA-directed RNA polymerase subunit Rpo5 from Pyrococcus horikoshii (strain ATCC 700860 / DSM 12428 / JCM 9974 / NBRC 100139 / OT-3).